The primary structure comprises 429 residues: MQLRNPELHLGCALALRFLALVSWDIPGARALDNGLARTPTMGWLHWERFMCNLDCQEEPDSCISEKLFMEMAELMVSEGWKDAGYEYLCIDDCWMAPQRDSEGRLQADPQRFPHGIRQLANYVHSKGLKLGIYADVGNKTCAGFPGSFGYYDIDAQTFADWGVDLLKFDGCYCDSLENLADGYKHMSLALNRTGRSIVYSCEWPLYMWPFQKPNYTEIRQYCNHWRNFADIDDSWKSIKSILDWTSFNQERIVDVAGPGGWNDPDMLVIGNFGLSWNQQVTQMALWAIMAAPLFMSNDLRHISPQAKALLQDKDVIAINQDPLGKQGYQLRQGDNFEVWERPLSGLAWAVAMINRQEIGGPRSYTIAVASLGKGVACNPACFITQLLPVKRKLGFYEWTSRLRSHINPTGTVLLQLENTMQMSLKDLL.

Positions 1-31 (MQLRNPELHLGCALALRFLALVSWDIPGARA) are cleaved as a signal peptide. Intrachain disulfides connect Cys52–Cys94 and Cys56–Cys63. Asn139 carries N-linked (GlcNAc...) asparagine glycosylation. Residues Cys142 and Cys172 are joined by a disulfide bond. Catalysis depends on Asp170, which acts as the Nucleophile. An N-linked (GlcNAc...) asparagine glycan is attached at Asn192. Cys202 and Cys223 are joined by a disulfide. 203-207 (EWPLY) contacts substrate. Asn215 carries N-linked (GlcNAc...) asparagine glycosylation. Residue Asp231 is the Proton donor of the active site. Cys378 and Cys382 are joined by a disulfide.

Belongs to the glycosyl hydrolase 27 family. Homodimer.

The protein resides in the lysosome. The enzyme catalyses Hydrolysis of terminal, non-reducing alpha-D-galactose residues in alpha-D-galactosides, including galactose oligosaccharides, galactomannans and galactolipids.. It catalyses the reaction a globoside Gb3Cer (d18:1(4E)) + H2O = a beta-D-Gal-(1-&gt;4)-beta-D-Glc-(1&lt;-&gt;1)-Cer(d18:1(4E)) + D-galactose. It carries out the reaction a globoside Gb3Cer + H2O = a beta-D-galactosyl-(1-&gt;4)-beta-D-glucosyl-(1&lt;-&gt;1)-ceramide + D-galactose. Galactosylgalactosylglucosylceramidase activity is stimulated by saposin B and ammonium chloride. In terms of biological role, catalyzes the hydrolysis of glycosphingolipids and participates in their degradation in the lysosome. In Homo sapiens (Human), this protein is Alpha-galactosidase A.